We begin with the raw amino-acid sequence, 342 residues long: N-acetyl-gamma-glutamyl-phosphate reductase (342 aa).

Residue Cys148 is part of the active site.

This sequence belongs to the NAGSA dehydrogenase family. Type 1 subfamily.

It localises to the cytoplasm. The catalysed reaction is N-acetyl-L-glutamate 5-semialdehyde + phosphate + NADP(+) = N-acetyl-L-glutamyl 5-phosphate + NADPH + H(+). The protein operates within amino-acid biosynthesis; L-arginine biosynthesis; N(2)-acetyl-L-ornithine from L-glutamate: step 3/4. Catalyzes the NADPH-dependent reduction of N-acetyl-5-glutamyl phosphate to yield N-acetyl-L-glutamate 5-semialdehyde. The polypeptide is N-acetyl-gamma-glutamyl-phosphate reductase (Methanococcus vannielii (strain ATCC 35089 / DSM 1224 / JCM 13029 / OCM 148 / SB)).